A 481-amino-acid chain; its full sequence is UDP-N-acetylmuramate--L-alanine ligase (481 aa).

Residue 122-128 (GVHGKTT) coordinates ATP.

Belongs to the MurCDEF family.

It localises to the cytoplasm. The catalysed reaction is UDP-N-acetyl-alpha-D-muramate + L-alanine + ATP = UDP-N-acetyl-alpha-D-muramoyl-L-alanine + ADP + phosphate + H(+). Its pathway is cell wall biogenesis; peptidoglycan biosynthesis. Functionally, cell wall formation. The polypeptide is UDP-N-acetylmuramate--L-alanine ligase (Treponema pallidum (strain Nichols)).